The chain runs to 518 residues: T-box transcription factor TBX5 (518 aa).

Positions 1–46 (MADADEGFGLAHTPLEPDAKDLPCDSKPESALGAPSKSPSSPQAAF) are disordered. Residues 15–28 (LEPDAKDLPCDSKP) are compositionally biased toward basic and acidic residues. Low complexity predominate over residues 34–45 (APSKSPSSPQAA). A DNA-binding region (T-box) is located at residues 58–238 (LHERELWLKF…NNPFAKGFRG (181 aa)). Residues 250-356 (MQSKEYPVVP…PSEEDSFYRS (107 aa)) form a disordered region. The segment covering 262–301 (TVRQKVASNHSPFSSESRALSTSSNLGSQYQCENGVSGPS) has biased composition (polar residues). Position 339 is an N6-acetyllysine (lysine 339).

In terms of assembly, monomer. Homodimer (via the T-box); binds DNA as homodimer. Interacts (via the T-box) with NKX2-5 (via the homeobox); this complex binds DNA. Interacts with GATA4. Interacts with KAT2A and KAT2B. Post-translationally, acetylation at Lys-339 by KAT2A and KAT2B promotes nuclear retention.

It localises to the nucleus. Its subcellular location is the cytoplasm. DNA-binding protein that regulates the transcription of several genes and is involved in heart development and limb pattern formation. Binds to the core DNA motif of NPPA promoter. This is T-box transcription factor TBX5 (TBX5) from Homo sapiens (Human).